The following is a 37-amino-acid chain: Large ribosomal subunit protein bL36c (37 aa).

This sequence belongs to the bacterial ribosomal protein bL36 family.

Its subcellular location is the plastid. The protein localises to the chloroplast. The polypeptide is Large ribosomal subunit protein bL36c (Cryptomeria japonica (Japanese cedar)).